Here is an 811-residue protein sequence, read N- to C-terminus: Actin filament-associated protein 1-like 2 (811 aa).

Disordered stretches follow at residues 67-110 (KEAQ…PPPK) and 132-168 (EPYN…QQHQ). In terms of domain architecture, PH 1 spans 181–277 (DAMICAFLWR…WLKVIQDISG (97 aa)). The disordered stretch occupies residues 294 to 326 (QRQIHPKAEGTDRHSGASESGSSTDGHPETPEI). Residues 299-309 (PKAEGTDRHSG) are compositionally biased toward basic and acidic residues. The PH 2 domain maps to 359-453 (ALETSNYLNV…WLGLLLLESG (95 aa)). Disordered regions lie at residues 500–532 (RGQR…GEAE) and 558–631 (LGSP…KERV). Basic and acidic residues-rich tracts occupy residues 521 to 532 (DEPKSEEKGEAE), 566 to 577 (VSGKKDNEESER), and 622 to 631 (RLEKSNKERV). Residues 642–737 (LLGKNRTEAE…KENLRKAELG (96 aa)) are a coiled coil.

In terms of assembly, interacts with src.

The protein localises to the cytoplasm. Its function is as follows. May play a role in a signaling cascade by enhancing the kinase activity of src. Contributes to src-regulated transcription activation. This Xenopus laevis (African clawed frog) protein is Actin filament-associated protein 1-like 2 (afap1l2).